Here is a 565-residue protein sequence, read N- to C-terminus: Glycine--tRNA ligase (565 aa).

Positions 98 and 164 each coordinate substrate. Residues 196–198 (RNE), 206–211 (IRLREF), 323–324 (EI), and 440–443 (GIDR) each bind ATP. 211-215 (FTQAE) is a substrate binding site. 436-440 (EPSFG) contributes to the substrate binding site.

This sequence belongs to the class-II aminoacyl-tRNA synthetase family.

It localises to the cytoplasm. It carries out the reaction tRNA(Gly) + glycine + ATP = glycyl-tRNA(Gly) + AMP + diphosphate. In terms of biological role, catalyzes the attachment of glycine to tRNA(Gly). This chain is Glycine--tRNA ligase, found in Methanothermobacter thermautotrophicus (strain ATCC 29096 / DSM 1053 / JCM 10044 / NBRC 100330 / Delta H) (Methanobacterium thermoautotrophicum).